Here is a 190-residue protein sequence, read N- to C-terminus: Ion-translocating oxidoreductase complex subunit B (190 aa).

Residues 1–26 are hydrophobic; the sequence is MLTFWLAVATLSALALVAGAVLGFAA. Residues 32-90 enclose the 4Fe-4S domain; sequence KTDPVAERIDALLPQSQCAQCGYPGCRPYAEAVAGGAPINKCVPGGEAVMLKIAAQLSV. Residues Cys49, Cys52, Cys57, Cys73, Cys115, Cys118, Cys121, Cys125, Cys145, Cys148, Cys151, and Cys155 each coordinate [4Fe-4S] cluster. 2 consecutive 4Fe-4S ferredoxin-type domains span residues 106-135 and 136-165; these read RVAW…GATR and AVHT…MRPL.

Belongs to the 4Fe4S bacterial-type ferredoxin family. RnfB subfamily. In terms of assembly, the complex is composed of six subunits: RnfA, RnfB, RnfC, RnfD, RnfE and RnfG. The cofactor is [4Fe-4S] cluster.

The protein resides in the cell inner membrane. In terms of biological role, part of a membrane-bound complex that couples electron transfer with translocation of ions across the membrane. The protein is Ion-translocating oxidoreductase complex subunit B of Sodalis glossinidius (strain morsitans).